A 607-amino-acid chain; its full sequence is Albumin B (607 aa).

Residues 1-18 (MKWITLICLLISSSFIES) form the signal peptide. The propeptide occupies 19-24 (RILFKR). 3 Albumin domains span residues 22–209 (FKRD…KQLM), 210–402 (KQSH…RFMN), and 403–600 (EAKE…VLIE). Histidine 30 contributes to the Cu cation binding site. Disulfide bonds link cysteine 80/cysteine 88, cysteine 101/cysteine 117, cysteine 116/cysteine 127, cysteine 147/cysteine 192, cysteine 191/cysteine 200, cysteine 223/cysteine 269, cysteine 268/cysteine 276, cysteine 288/cysteine 302, cysteine 301/cysteine 312, cysteine 339/cysteine 384, cysteine 383/cysteine 392, cysteine 415/cysteine 461, cysteine 460/cysteine 471, cysteine 484/cysteine 500, cysteine 499/cysteine 510, cysteine 537/cysteine 582, and cysteine 581/cysteine 590.

Belongs to the ALB/AFP/VDB family. In terms of tissue distribution, plasma.

The protein resides in the secreted. Functionally, serum albumin, the main protein of plasma, has a good binding capacity for water, Ca(2+), Na(+), K(+), fatty acids, hormones, bilirubin and drugs. Its main function is the regulation of the colloidal osmotic pressure of blood. This chain is Albumin B (alb-b), found in Xenopus laevis (African clawed frog).